Here is a 405-residue protein sequence, read N- to C-terminus: Histidine decarboxylase (405 aa).

Substrate is bound at residue H121. At K234 the chain carries N6-(pyridoxal phosphate)lysine.

This sequence belongs to the group II decarboxylase family. In terms of assembly, homotetramer. The cofactor is pyridoxal 5'-phosphate.

The enzyme catalyses L-histidine + H(+) = histamine + CO2. The protein operates within siderophore biosynthesis; pseudomonine biosynthesis. The chain is Histidine decarboxylase from Pseudomonas fluorescens.